The primary structure comprises 275 residues: NH(3)-dependent NAD(+) synthetase (275 aa).

50-57 (GISGGVDS) is a binding site for ATP. Position 56 (Asp-56) interacts with Mg(2+). Arg-147 contributes to the deamido-NAD(+) binding site. Thr-167 is an ATP binding site. A Mg(2+)-binding site is contributed by Glu-172. Deamido-NAD(+) is bound by residues Lys-180 and Asp-187. Positions 196 and 218 each coordinate ATP. Residue 267–268 (HK) coordinates deamido-NAD(+).

Belongs to the NAD synthetase family. As to quaternary structure, homodimer.

It catalyses the reaction deamido-NAD(+) + NH4(+) + ATP = AMP + diphosphate + NAD(+) + H(+). It functions in the pathway cofactor biosynthesis; NAD(+) biosynthesis; NAD(+) from deamido-NAD(+) (ammonia route): step 1/1. In terms of biological role, catalyzes the ATP-dependent amidation of deamido-NAD to form NAD. Uses ammonia as a nitrogen source. The polypeptide is NH(3)-dependent NAD(+) synthetase (Pseudomonas putida (strain GB-1)).